The chain runs to 358 residues: Isopentenyl-diphosphate delta-isomerase (358 aa).

Residue 12 to 13 (RK) participates in substrate binding. Residues 69–71 (AMT), Ser99, and Asn128 each bind FMN. Gln158 contributes to the substrate binding site. Glu159 is a binding site for Mg(2+). FMN is bound by residues Lys190, Thr220, 267 to 269 (GIR), and 288 to 289 (AG).

This sequence belongs to the IPP isomerase type 2 family. In terms of assembly, homooctamer. Dimer of tetramers. FMN is required as a cofactor. NADPH serves as cofactor. It depends on Mg(2+) as a cofactor.

It localises to the cytoplasm. The enzyme catalyses isopentenyl diphosphate = dimethylallyl diphosphate. Its function is as follows. Involved in the biosynthesis of isoprenoids. Catalyzes the 1,3-allylic rearrangement of the homoallylic substrate isopentenyl (IPP) to its allylic isomer, dimethylallyl diphosphate (DMAPP). This chain is Isopentenyl-diphosphate delta-isomerase, found in Listeria innocua serovar 6a (strain ATCC BAA-680 / CLIP 11262).